A 649-amino-acid chain; its full sequence is tRNA-guanine(15) transglycosylase (649 aa).

Residue Asp-88 is the Nucleophile of the active site. Residues Asp-123 and Ala-194 each contribute to the substrate site. The Zn(2+) site is built by Cys-280, Cys-282, and Cys-285. In terms of domain architecture, PUA spans 572–647; sequence KYRVIVDKSV…VAVNIRGGLK (76 aa).

It belongs to the archaeosine tRNA-ribosyltransferase family. Zn(2+) is required as a cofactor.

It carries out the reaction guanosine(15) in tRNA + 7-cyano-7-deazaguanine = 7-cyano-7-carbaguanosine(15) in tRNA + guanine. Its pathway is tRNA modification; archaeosine-tRNA biosynthesis. Functionally, exchanges the guanine residue with 7-cyano-7-deazaguanine (preQ0) at position 15 in the dihydrouridine loop (D-loop) of archaeal tRNAs. The sequence is that of tRNA-guanine(15) transglycosylase from Methanococcus vannielii (strain ATCC 35089 / DSM 1224 / JCM 13029 / OCM 148 / SB).